A 448-amino-acid chain; its full sequence is Zinc finger and BTB domain-containing protein 14 (448 aa).

A BTB domain is found at Cys-36–Lys-102. The Nuclear localization signal signature appears at His-50–Lys-66. Residues Val-130–Thr-193 form a disordered region. Acidic residues predominate over residues Asp-156–Asp-167. 5 consecutive C2H2-type zinc fingers follow at residues Ile-275–Pro-302, Phe-303–Pro-330, Tyr-331–Pro-358, Phe-359–Pro-386, and Phe-387–Gln-415. Residues Arg-404–Gln-415 show a composition bias toward basic and acidic residues. Residues Arg-404 to Glu-425 form a disordered region. Over residues Val-416–Glu-425 the composition is skewed to polar residues.

It belongs to the krueppel C2H2-type zinc-finger protein family. Interacts with ZBTB21.

Its subcellular location is the nucleus. Transcriptional activator of the dopamine transporter (DAT), binding it's promoter at the consensus sequence 5'-CCTGCACAGTTCACGGA-3'. Binds to 5'-d(GCC)(n)-3' trinucleotide repeats in promoter regions and acts as a repressor of the FMR1 gene. Transcriptional repressor of MYC and thymidine kinase promoters. This chain is Zinc finger and BTB domain-containing protein 14 (ZBTB14), found in Gallus gallus (Chicken).